The sequence spans 237 residues: Lectin (237 aa).

The Mn(2+) site is built by Glu8 and Asp10. Residues Asp10, Tyr12, Asn14, and Asp19 each coordinate Ca(2+). The a carbohydrate site is built by Tyr12 and Asn14. Asp19 and His24 together coordinate Mn(2+). A carbohydrate is bound at residue 98-100; it reads GLY. Ca(2+) is bound at residue Asp208. Residues Gly227 and Arg228 each contribute to the a carbohydrate site.

The protein belongs to the leguminous lectin family. As to quaternary structure, homotetramer; dimer of dimers. Concanavalin A-like lectins of the Diocleinae subtribe undergo proteolytic processing referred to as circular permutation. The propeptide is split into an N-terminal and a C-terminal part, the gamma and beta chain, respectively. These are then religated in beta-gamma order to form the mature alpha chain. The beta and gamma chains can often be detected in cell extracts. Residues 1-118 of the mature chain, as displayed here, probably constitute the beta chain in the propeptide, residues 119-237 the gamma chain.

Its function is as follows. D-mannose/D-glucose-binding lectin with hemagglutinating activity towards rabbit and human erythrocytes. In rats, induces dose-dependent paw edema. Has low cytotoxicity against Artemisia sp. The sequence is that of Lectin from Macropsychanthus comosus (Sea purse).